A 436-amino-acid chain; its full sequence is Trigger factor (436 aa).

The region spanning 161-246 (GMRVTMDFIG…LIKVEEQILP (86 aa)) is the PPIase FKBP-type domain.

This sequence belongs to the FKBP-type PPIase family. Tig subfamily.

Its subcellular location is the cytoplasm. The enzyme catalyses [protein]-peptidylproline (omega=180) = [protein]-peptidylproline (omega=0). Involved in protein export. Acts as a chaperone by maintaining the newly synthesized protein in an open conformation. Functions as a peptidyl-prolyl cis-trans isomerase. This Aeromonas salmonicida (strain A449) protein is Trigger factor.